Consider the following 153-residue polypeptide: Membrane-spanning 4-domains subfamily A member 13 (153 aa).

4 helical membrane-spanning segments follow: residues 1–21, 36–56, 71–91, and 111–131; these read MTGI…MGQI, GCSL…RATW, ILCM…LSTF, and VLLS…IFGC.

Belongs to the MS4A family.

The protein resides in the membrane. Its function is as follows. May be involved in signal transduction as a component of a multimeric receptor complex. This Bos taurus (Bovine) protein is Membrane-spanning 4-domains subfamily A member 13 (MS4A13).